A 141-amino-acid polypeptide reads, in one-letter code: Large ribosomal subunit protein uL11 (141 aa).

The protein belongs to the universal ribosomal protein uL11 family. Part of the ribosomal stalk of the 50S ribosomal subunit. Interacts with L10 and the large rRNA to form the base of the stalk. L10 forms an elongated spine to which L12 dimers bind in a sequential fashion forming a multimeric L10(L12)X complex. Post-translationally, one or more lysine residues are methylated.

Forms part of the ribosomal stalk which helps the ribosome interact with GTP-bound translation factors. The chain is Large ribosomal subunit protein uL11 from Streptococcus pyogenes serotype M1.